The primary structure comprises 350 residues: Ketol-acid reductoisomerase (NADP(+)) (350 aa).

The KARI N-terminal Rossmann domain occupies 3–183 (AQIWYEDDGD…GALRAGAIKT (181 aa)). Residues 26–29 (YGSQ), Arg49, Ser52, Ser54, and 84–87 (DQYQ) contribute to the NADP(+) site. The active site involves His109. Gly135 contributes to the NADP(+) binding site. The 144-residue stretch at 184–327 (TFKEETETDL…PKLRAMFSWN (144 aa)) folds into the KARI C-terminal knotted domain. Mg(2+) is bound by residues Asp192, Glu196, Glu228, and Glu232. Ser253 serves as a coordination point for substrate.

This sequence belongs to the ketol-acid reductoisomerase family. The cofactor is Mg(2+).

It catalyses the reaction (2R)-2,3-dihydroxy-3-methylbutanoate + NADP(+) = (2S)-2-acetolactate + NADPH + H(+). The catalysed reaction is (2R,3R)-2,3-dihydroxy-3-methylpentanoate + NADP(+) = (S)-2-ethyl-2-hydroxy-3-oxobutanoate + NADPH + H(+). Its pathway is amino-acid biosynthesis; L-isoleucine biosynthesis; L-isoleucine from 2-oxobutanoate: step 2/4. It participates in amino-acid biosynthesis; L-valine biosynthesis; L-valine from pyruvate: step 2/4. Functionally, involved in the biosynthesis of branched-chain amino acids (BCAA). Catalyzes an alkyl-migration followed by a ketol-acid reduction of (S)-2-acetolactate (S2AL) to yield (R)-2,3-dihydroxy-isovalerate. In the isomerase reaction, S2AL is rearranged via a Mg-dependent methyl migration to produce 3-hydroxy-3-methyl-2-ketobutyrate (HMKB). In the reductase reaction, this 2-ketoacid undergoes a metal-dependent reduction by NADPH to yield (R)-2,3-dihydroxy-isovalerate. The polypeptide is Ketol-acid reductoisomerase (NADP(+)) (Bifidobacterium animalis subsp. lactis (strain AD011)).